The primary structure comprises 284 residues: Ribosomal RNA small subunit methyltransferase A (284 aa).

S-adenosyl-L-methionine contacts are provided by histidine 23, leucine 25, glycine 50, glutamate 71, aspartate 92, and asparagine 121.

The protein belongs to the class I-like SAM-binding methyltransferase superfamily. rRNA adenine N(6)-methyltransferase family. RsmA subfamily.

The protein localises to the cytoplasm. The catalysed reaction is adenosine(1518)/adenosine(1519) in 16S rRNA + 4 S-adenosyl-L-methionine = N(6)-dimethyladenosine(1518)/N(6)-dimethyladenosine(1519) in 16S rRNA + 4 S-adenosyl-L-homocysteine + 4 H(+). Its function is as follows. Specifically dimethylates two adjacent adenosines (A1518 and A1519) in the loop of a conserved hairpin near the 3'-end of 16S rRNA in the 30S particle. May play a critical role in biogenesis of 30S subunits. The chain is Ribosomal RNA small subunit methyltransferase A from Verminephrobacter eiseniae (strain EF01-2).